The sequence spans 150 residues: Actin-related protein 2/3 complex subunit 5-C (150 aa).

A disordered region spans residues 21 to 45 (NKFVDEEEAGEGQQGPDEGEVDSAI).

The protein belongs to the ARPC5 family. Component of the Arp2/3 complex composed of actr2/arp2, actr3/arp3, arpc1 (arpc1a or arpc1b), arpc2, arpc3, arpc4 and arpc5.

The protein localises to the cytoplasm. It localises to the cytoskeleton. Its subcellular location is the cell projection. It is found in the nucleus. Component of the Arp2/3 complex, a multiprotein complex that mediates actin polymerization upon stimulation by nucleation-promoting factor (NPF). The Arp2/3 complex mediates the formation of branched actin networks in the cytoplasm, providing the force for cell motility. In addition to its role in the cytoplasmic cytoskeleton, the Arp2/3 complex also promotes actin polymerization in the nucleus, thereby regulating gene transcription and repair of damaged DNA. The Arp2/3 complex promotes homologous recombination (HR) repair in response to DNA damage by promoting nuclear actin polymerization, leading to drive motility of double-strand breaks (DSBs). This chain is Actin-related protein 2/3 complex subunit 5-C (arpc5-c), found in Xenopus laevis (African clawed frog).